The following is a 305-amino-acid chain: MELHSLSKRNSPVDPCNALEWSSGETSGDHIEEATIRDAFCYQKNLVSTPRADVVEVCRLSTSPASPTSLLQDSAIQTSFSLSGPPDSGNNQVMADRKVCNCCSQELETSFTYVDENVNLEQRSQRSPSAKGSNHPVDLGWGNPNEWSHETAMSLMSEDDDDTSSEATSSGKSVDYGFISAILFLVTGILLVIISYIVPREVTVDPNTVAAREMERLEKESAMLGAHLDRCVIAGLCLLTLGGVVLSCLLMMSMWKGELYRRNRFASSKESAKLYGSFNFRMKTSTNEDTLELSLVEEDALAVQS.

A Phosphoserine modification is found at Ser11. Residues 122-132 (QRSQRSPSAKG) show a composition bias toward polar residues. Residues 122 to 143 (QRSQRSPSAKGSNHPVDLGWGN) form a disordered region. 2 helical membrane-spanning segments follow: residues 178-198 (FISA…SYIV) and 232-252 (VIAG…LLMM).

Belongs to the TMEM74 family.

Its subcellular location is the lysosome membrane. It localises to the cytoplasmic vesicle. The protein resides in the autophagosome membrane. Functionally, plays an essential role in autophagy. TMEM74-induced autophagy may involve PI3K signal transduction. In Mus musculus (Mouse), this protein is Transmembrane protein 74 (Tmem74).